The chain runs to 125 residues: Splicing factor 3B subunit 6 (125 aa).

Positions 16-29 (EVNRILYIRNLPYK) are interaction with pre-mRNA branch site. In terms of domain architecture, RRM spans 19–94 (RILYIRNLPY…RYLVVLYYNA (76 aa)). An N6-acetyllysine; alternate modification is found at Lys29. Lys29 is covalently cross-linked (Glycyl lysine isopeptide (Lys-Gly) (interchain with G-Cter in SUMO2); alternate). An N6-acetyllysine modification is found at Lys41.

In terms of assembly, component of the 17S U2 SnRNP complex, a ribonucleoprotein complex that contains small nuclear RNA (snRNA) U2 and a number of specific proteins. Part of the SF3B subcomplex of the 17S U2 SnRNP complex. SF3B associates with the splicing subcomplex SF3A and a 12S RNA unit to form the U2 small nuclear ribonucleoproteins complex (U2 snRNP). Within the SF3B complex interacts directly with SF3B1. Component of the minor spliceosome, which splices U12-type introns.

It is found in the nucleus. In terms of biological role, component of the 17S U2 SnRNP complex of the spliceosome, a large ribonucleoprotein complex that removes introns from transcribed pre-mRNAs. The 17S U2 SnRNP complex (1) directly participates in early spliceosome assembly and (2) mediates recognition of the intron branch site during pre-mRNA splicing by promoting the selection of the pre-mRNA branch-site adenosine, the nucleophile for the first step of splicing. Within the 17S U2 SnRNP complex, SF3B6 is part of the SF3B subcomplex, which is required for 'A' complex assembly formed by the stable binding of U2 snRNP to the branchpoint sequence in pre-mRNA. Sequence independent binding of SF3A and SF3B subcomplexes upstream of the branch site is essential, it may anchor U2 snRNP to the pre-mRNA. Within the 17S U2 SnRNP complex, SF3B6 directly contacts the pre-mRNA branch site adenosine for the first catalytic step of splicing. SF3B6 stabilizes the intron branch site-U2 snRNA duplex, thereby promoting-binding of introns with poor sequence complementarity. Also acts as a component of the minor spliceosome, which is involved in the splicing of U12-type introns in pre-mRNAs. This chain is Splicing factor 3B subunit 6 (Sf3b6), found in Mus musculus (Mouse).